The primary structure comprises 230 residues: 2-amino-5-formylamino-6-ribosylaminopyrimidin-4(3H)-one 5'-monophosphate deformylase (230 aa).

Glutamate 29, histidine 31, aspartate 40, and histidine 109 together coordinate Fe cation.

It belongs to the creatininase superfamily. FAPy deformylase family. Homodimer. Fe(2+) is required as a cofactor. It depends on Zn(2+) as a cofactor.

It carries out the reaction 2-amino-5-formylamino-6-(5-phospho-D-ribosylamino)pyrimidin-4(3H)-one + H2O = 2,5-diamino-6-(1-D-ribosylamino)pyrimidin-4(3H)-one 5'-phosphate + formate + H(+). The protein operates within cofactor biosynthesis; coenzyme F420 biosynthesis. Its pathway is cofactor biosynthesis; riboflavin biosynthesis. Its function is as follows. Catalyzes the hydrolysis of the formamide of 2-amino-5-formylamino-6-ribosylamino-4(3H)-pyrimidinone 5'-monophosphate (FAPy) to form 2,5-diamino-6-ribosylamino-4(3H)-pyrimidinone 5'-phosphate (APy). This is 2-amino-5-formylamino-6-ribosylaminopyrimidin-4(3H)-one 5'-monophosphate deformylase from Methanobrevibacter smithii (strain ATCC 35061 / DSM 861 / OCM 144 / PS).